The following is a 930-amino-acid chain: Translation initiation factor IF-2 (930 aa).

Positions 50-67 are enriched in low complexity; it reads FKPAAAPKVEAKPAAPKV. Disordered stretches follow at residues 50–196 and 260–346; these read FKPA…RIDF and EVVP…HELP. Basic and acidic residues-rich tracts occupy residues 68–90 and 110–125; these read SAEK…EAKP and FKAE…AERR. A compositionally biased stretch (low complexity) spans 129 to 141; it reads KGNNRDQQQNGNR. 2 stretches are compositionally biased toward basic and acidic residues: residues 157 to 172 and 262 to 295; these read RDNR…EQGQ and VPEK…DGPR. Residues 309–318 show a composition bias toward low complexity; the sequence is NQKNSNWNNN. Residues 337 to 346 show a composition bias toward basic and acidic residues; sequence VTERKFHELP. The region spanning 432–599 is the tr-type G domain; it reads ERPPVVTIMG…TVLLVAEIQE (168 aa). Residues 441–448 form a G1 region; it reads GHVDHGKT. 441–448 is a binding site for GTP; the sequence is GHVDHGKT. Residues 466–470 are G2; sequence GITQH. A G3 region spans residues 487–490; it reads DTPG. Residues 487–491 and 541–544 contribute to the GTP site; these read DTPGH and NKID. The G4 stretch occupies residues 541-544; it reads NKID. A G5 region spans residues 577-579; it reads SAK.

Belongs to the TRAFAC class translation factor GTPase superfamily. Classic translation factor GTPase family. IF-2 subfamily.

The protein resides in the cytoplasm. Functionally, one of the essential components for the initiation of protein synthesis. Protects formylmethionyl-tRNA from spontaneous hydrolysis and promotes its binding to the 30S ribosomal subunits. Also involved in the hydrolysis of GTP during the formation of the 70S ribosomal complex. This is Translation initiation factor IF-2 from Streptococcus pneumoniae serotype 19F (strain G54).